The sequence spans 483 residues: ATP-dependent RNA helicase DDX25 (483 aa).

The Nuclear export signal signature appears at 61–74 (LAANSLLNKLIHQS). A Q motif motif is present at residues 97-125 (KTFEELRLKEELLKGIYAMGFNRPSKIQE). The Nuclear localization signal signature appears at 100-114 (EELRLKEELLKGIYA). A Helicase ATP-binding domain is found at 130–300 (MMLAHPPQNL…ERIIPDPNVI (171 aa)). 143 to 150 (SQSGTGKT) provides a ligand contact to ATP. The short motif at 247 to 250 (DEAD) is the DEAD box element. In terms of domain architecture, Helicase C-terminal spans 311 to 478 (NIRQYYVLCE…QLNAEDMDEI (168 aa)).

The protein belongs to the DEAD box helicase family. In terms of processing, phosphorylated on threonine residues. The phosphorylated form is found in the cytoplasm but not in the nucleus. Highly expressed in the Leydig and germ cells of the testis and weakly expressed in the pituitary and hypothalamus.

It is found in the cytoplasm. It localises to the nucleus. The enzyme catalyses ATP + H2O = ADP + phosphate + H(+). In terms of biological role, ATP-dependent RNA helicase. Required for mRNA export and translation regulation during spermatid development. In Homo sapiens (Human), this protein is ATP-dependent RNA helicase DDX25 (DDX25).